We begin with the raw amino-acid sequence, 297 residues long: PsbP domain-containing protein 5, chloroplastic (297 aa).

This sequence belongs to the PsbP family.

The protein resides in the plastid. The protein localises to the chloroplast thylakoid lumen. Its function is as follows. Involved in strigolactone biosynthesis. This is PsbP domain-containing protein 5, chloroplastic (PPD5) from Arabidopsis thaliana (Mouse-ear cress).